The primary structure comprises 130 residues: Small ribosomal subunit protein uS9 (130 aa).

The segment at 98–130 (LKRAGFLTRDARKKERKKYGQPGARKRFQYSKR) is disordered. The span at 111–130 (KERKKYGQPGARKRFQYSKR) shows a compositional bias: basic residues.

Belongs to the universal ribosomal protein uS9 family.

In Sorangium cellulosum (strain So ce56) (Polyangium cellulosum (strain So ce56)), this protein is Small ribosomal subunit protein uS9.